We begin with the raw amino-acid sequence, 465 residues long: Probable Xaa-Pro aminopeptidase pepP (465 aa).

4 residues coordinate Mn(2+): Asp261, Asp272, Glu395, and Glu435.

The protein belongs to the peptidase M24B family. Mn(2+) is required as a cofactor.

It carries out the reaction Release of any N-terminal amino acid, including proline, that is linked to proline, even from a dipeptide or tripeptide.. Functionally, catalyzes the removal of a penultimate prolyl residue from the N-termini of peptides. The chain is Probable Xaa-Pro aminopeptidase pepP (pepP) from Talaromyces marneffei (strain ATCC 18224 / CBS 334.59 / QM 7333) (Penicillium marneffei).